The following is a 179-amino-acid chain: MKKVFLCAILASLSYPAIASSLQDQLSAVAEAEQQGKNEEQRQHDEWVAERNREIQQEKQRRANAQAAANKRAATAAANKKARQDKLDAEASADKKRDQSYEDELRSLEIQKQKLALAKEEARVKRENEFIDQELKHKAAQTDVVQSEADANRNMTEGGRDLMKSVGKAEENKSDSWFN.

Disordered stretches follow at residues 26 to 103 (LSAV…SYED) and 136 to 179 (KHKA…SWFN). Residues 34–61 (QQGKNEEQRQHDEWVAERNREIQQEKQR) show a composition bias toward basic and acidic residues. Over residues 63–79 (ANAQAAANKRAATAAAN) the composition is skewed to low complexity. 2 stretches are compositionally biased toward basic and acidic residues: residues 82-103 (ARQD…SYED) and 158-179 (GGRD…SWFN).

This is an uncharacterized protein from Escherichia coli (strain K12).